The primary structure comprises 299 residues: Type II restriction enzyme BglI (299 aa).

Mg(2+)-binding residues include Asp-116, Asp-142, and Ile-143.

In terms of assembly, homodimer. It depends on Mg(2+) as a cofactor.

It carries out the reaction Endonucleolytic cleavage of DNA to give specific double-stranded fragments with terminal 5'-phosphates.. A P subtype restriction enzyme that recognizes the double-stranded sequence 5'-GCCNNNNNGGC-3' and cleaves before N-8. The sequence is that of Type II restriction enzyme BglI (bglIR) from Bacillus subtilis.